The sequence spans 110 residues: Tyrosine-protein phosphatase 3 (110 aa).

The Tyrosine-protein phosphatase domain maps to 1–110 (QKCATIVMVT…NPPHSGPIVV (110 aa)). Residue Asp80 participates in substrate binding.

It belongs to the protein-tyrosine phosphatase family.

The enzyme catalyses O-phospho-L-tyrosyl-[protein] + H2O = L-tyrosyl-[protein] + phosphate. The protein is Tyrosine-protein phosphatase 3 (STY-3) of Styela plicata (Wrinkled sea squirt).